A 430-amino-acid chain; its full sequence is Lipoyl synthase, chloroplastic (430 aa).

Positions 1 to 16 are enriched in polar residues; it reads MRSLATLHQSPASCSR. Residues 1–40 constitute a chloroplast transit peptide; the sequence is MRSLATLHQSPASCSRSAPVAPCPARRANSSRRVARQGPR. 2 disordered regions span residues 1 to 55 and 85 to 119; these read MRSL…SEDV and HLRSKSKSAAPVSPFAAPSPGSPSASSMLGPSLGA. Over residues 91-119 the composition is skewed to low complexity; the sequence is KSAAPVSPFAAPSPGSPSASSMLGPSLGA. 7 residues coordinate [4Fe-4S] cluster: Cys-155, Cys-160, Cys-166, Cys-183, Cys-187, Cys-190, and Ser-397. A Radical SAM core domain is found at 166 to 386; that stretch reads CWNGELATAT…KFGQEEIGFR (221 aa).

Belongs to the radical SAM superfamily. Lipoyl synthase family. [4Fe-4S] cluster is required as a cofactor.

The protein resides in the plastid. Its subcellular location is the chloroplast. It catalyses the reaction [[Fe-S] cluster scaffold protein carrying a second [4Fe-4S](2+) cluster] + N(6)-octanoyl-L-lysyl-[protein] + 2 oxidized [2Fe-2S]-[ferredoxin] + 2 S-adenosyl-L-methionine + 4 H(+) = [[Fe-S] cluster scaffold protein] + N(6)-[(R)-dihydrolipoyl]-L-lysyl-[protein] + 4 Fe(3+) + 2 hydrogen sulfide + 2 5'-deoxyadenosine + 2 L-methionine + 2 reduced [2Fe-2S]-[ferredoxin]. The protein operates within protein modification; protein lipoylation via endogenous pathway; protein N(6)-(lipoyl)lysine from octanoyl-[acyl-carrier-protein]: step 2/2. In terms of biological role, catalyzes the radical-mediated insertion of two sulfur atoms into the C-6 and C-8 positions of the octanoyl moiety bound to the lipoyl domains of lipoate-dependent enzymes, thereby converting the octanoylated domains into lipoylated derivatives. This chain is Lipoyl synthase, chloroplastic, found in Chlamydomonas reinhardtii (Chlamydomonas smithii).